Consider the following 120-residue polypeptide: NAD(P)H-quinone oxidoreductase subunit 3, chloroplastic (120 aa).

The next 3 helical transmembrane spans lie at 9–29 (IFWT…WISG), 64–84 (MFAL…PWAM), and 88–108 (VLGV…VVGL).

The protein belongs to the complex I subunit 3 family. NDH is composed of at least 16 different subunits, 5 of which are encoded in the nucleus.

Its subcellular location is the plastid. The protein localises to the chloroplast thylakoid membrane. The catalysed reaction is a plastoquinone + NADH + (n+1) H(+)(in) = a plastoquinol + NAD(+) + n H(+)(out). It carries out the reaction a plastoquinone + NADPH + (n+1) H(+)(in) = a plastoquinol + NADP(+) + n H(+)(out). Its function is as follows. NDH shuttles electrons from NAD(P)H:plastoquinone, via FMN and iron-sulfur (Fe-S) centers, to quinones in the photosynthetic chain and possibly in a chloroplast respiratory chain. The immediate electron acceptor for the enzyme in this species is believed to be plastoquinone. Couples the redox reaction to proton translocation, and thus conserves the redox energy in a proton gradient. The protein is NAD(P)H-quinone oxidoreductase subunit 3, chloroplastic of Lolium perenne (Perennial ryegrass).